Reading from the N-terminus, the 528-residue chain is GMP synthase [glutamine-hydrolyzing] (528 aa).

The Glutamine amidotransferase type-1 domain maps to S13–D204. The active-site Nucleophile is the C90. Catalysis depends on residues H178 and E180. The region spanning W205–R403 is the GMPS ATP-PPase domain. An ATP-binding site is contributed by S232–S238.

Homodimer.

It catalyses the reaction XMP + L-glutamine + ATP + H2O = GMP + L-glutamate + AMP + diphosphate + 2 H(+). The protein operates within purine metabolism; GMP biosynthesis; GMP from XMP (L-Gln route): step 1/1. Catalyzes the synthesis of GMP from XMP. The sequence is that of GMP synthase [glutamine-hydrolyzing] from Prochlorococcus marinus (strain AS9601).